A 337-amino-acid polypeptide reads, in one-letter code: Fructose-1,6-bisphosphatase class 1 (337 aa).

Residues glutamate 89, aspartate 112, leucine 114, and aspartate 115 each coordinate Mg(2+). Residues 115 to 118, asparagine 208, tyrosine 241, and lysine 271 contribute to the substrate site; that span reads DGSS. Mg(2+) is bound at residue glutamate 277.

It belongs to the FBPase class 1 family. Homotetramer. It depends on Mg(2+) as a cofactor.

The protein localises to the cytoplasm. The enzyme catalyses beta-D-fructose 1,6-bisphosphate + H2O = beta-D-fructose 6-phosphate + phosphate. It functions in the pathway carbohydrate biosynthesis; gluconeogenesis. The polypeptide is Fructose-1,6-bisphosphatase class 1 (Yersinia enterocolitica serotype O:8 / biotype 1B (strain NCTC 13174 / 8081)).